An 812-amino-acid chain; its full sequence is Valine--tRNA ligase (812 aa).

The short motif at 47-57 (PTISGQLHIGH) is the 'HIGH' region element. The short motif at 536–540 (KMSKS) is the 'KMSKS' region element. ATP is bound at residue Lys-539.

It belongs to the class-I aminoacyl-tRNA synthetase family. ValS type 2 subfamily. As to quaternary structure, monomer.

It localises to the cytoplasm. The enzyme catalyses tRNA(Val) + L-valine + ATP = L-valyl-tRNA(Val) + AMP + diphosphate. Functionally, catalyzes the attachment of valine to tRNA(Val). As ValRS can inadvertently accommodate and process structurally similar amino acids such as threonine, to avoid such errors, it has a 'posttransfer' editing activity that hydrolyzes mischarged Thr-tRNA(Val) in a tRNA-dependent manner. The chain is Valine--tRNA ligase from Ehrlichia ruminantium (strain Gardel).